The sequence spans 233 residues: Lipoprotein-releasing system ATP-binding protein LolD (233 aa).

One can recognise an ABC transporter domain in the interval 7–233 (IHCEKLSKTY…QLQSESERNH (227 aa)). An ATP-binding site is contributed by 43–50 (GASGAGKS).

Belongs to the ABC transporter superfamily. Lipoprotein translocase (TC 3.A.1.125) family. As to quaternary structure, the complex is composed of two ATP-binding proteins (LolD) and two transmembrane proteins (LolC and LolE).

It localises to the cell inner membrane. Its function is as follows. Part of the ABC transporter complex LolCDE involved in the translocation of mature outer membrane-directed lipoproteins, from the inner membrane to the periplasmic chaperone, LolA. Responsible for the formation of the LolA-lipoprotein complex in an ATP-dependent manner. This Coxiella burnetii (strain RSA 493 / Nine Mile phase I) protein is Lipoprotein-releasing system ATP-binding protein LolD.